Here is a 301-residue protein sequence, read N- to C-terminus: Nucleotide-binding protein Helmi_06460 (301 aa).

17 to 24 (GLSGAGKS) contacts ATP. GTP is bound at residue 68-71 (DIRG).

It belongs to the RapZ-like family.

Functionally, displays ATPase and GTPase activities. The sequence is that of Nucleotide-binding protein Helmi_06460 from Heliobacterium modesticaldum (strain ATCC 51547 / Ice1).